We begin with the raw amino-acid sequence, 290 residues long: 4-diphosphocytidyl-2-C-methyl-D-erythritol kinase (290 aa).

Residue Lys-10 is part of the active site. Residue 95-105 (PVAAGLAGGSS) participates in ATP binding. Asp-137 is a catalytic residue.

Belongs to the GHMP kinase family. IspE subfamily.

The catalysed reaction is 4-CDP-2-C-methyl-D-erythritol + ATP = 4-CDP-2-C-methyl-D-erythritol 2-phosphate + ADP + H(+). The protein operates within isoprenoid biosynthesis; isopentenyl diphosphate biosynthesis via DXP pathway; isopentenyl diphosphate from 1-deoxy-D-xylulose 5-phosphate: step 3/6. In terms of biological role, catalyzes the phosphorylation of the position 2 hydroxy group of 4-diphosphocytidyl-2C-methyl-D-erythritol. The chain is 4-diphosphocytidyl-2-C-methyl-D-erythritol kinase from Geobacillus kaustophilus (strain HTA426).